A 481-amino-acid polypeptide reads, in one-letter code: MADKITSRSEDYSQWYIDLVRSAKLADYADVRGCMDIRPNGYAIWEKMQAALDRMFKETGHVNAYFPLFIPESFIAKEAEHIEGFAPECAVVTHGGGEELAEKLYIRPTSETIIWSSYKKWIQSYRDLPILINQWANVVRWEMRTRLFLRTTEFLWQEGHTAHANPEESQEEVLRMINVYKTFAEEYMAMPVIMGKKTDNEKFAGAVDTWCIEAMMQDSKALQAGTSHNLGQNFAKAFDCQFQTKDGVLDYVWATSWGVSTRLIGALIMAHSDDRGLVLPPKLATRQVVIIPILRGDKAAVIERANALAQELNKNGIPSFVDSSEQNSPGWKFAEYELQGIPIRIELGPRDIEKGICIAARRDTLEKTELALDETLPDQISEILNTIQESMFERALQFRTEHTFEVQSYEEFKVAVEKGFVIAHWDGTAETEAKIKAETKATIRVLPEEADYIAQYRIDEPGTCIYSGKPAARKVVFAKAY.

Belongs to the class-II aminoacyl-tRNA synthetase family. ProS type 3 subfamily. In terms of assembly, homodimer.

The protein localises to the cytoplasm. It catalyses the reaction tRNA(Pro) + L-proline + ATP = L-prolyl-tRNA(Pro) + AMP + diphosphate. In terms of biological role, catalyzes the attachment of proline to tRNA(Pro) in a two-step reaction: proline is first activated by ATP to form Pro-AMP and then transferred to the acceptor end of tRNA(Pro). This chain is Proline--tRNA ligase, found in Pelodictyon phaeoclathratiforme (strain DSM 5477 / BU-1).